The primary structure comprises 307 residues: 4-diphosphocytidyl-2-C-methyl-D-erythritol kinase (307 aa).

The active site involves Lys9. 94-104 (PIGAGLAGGSS) contacts ATP. Asp136 is a catalytic residue.

The protein belongs to the GHMP kinase family. IspE subfamily.

The catalysed reaction is 4-CDP-2-C-methyl-D-erythritol + ATP = 4-CDP-2-C-methyl-D-erythritol 2-phosphate + ADP + H(+). It participates in isoprenoid biosynthesis; isopentenyl diphosphate biosynthesis via DXP pathway; isopentenyl diphosphate from 1-deoxy-D-xylulose 5-phosphate: step 3/6. Its function is as follows. Catalyzes the phosphorylation of the position 2 hydroxy group of 4-diphosphocytidyl-2C-methyl-D-erythritol. In Synechococcus sp. (strain CC9902), this protein is 4-diphosphocytidyl-2-C-methyl-D-erythritol kinase.